The sequence spans 1094 residues: Protein transport protein Sec24C (1094 aa).

The tract at residues 1–338 is disordered; that stretch reads MNVNQSVPPV…PIQVIEDDRN (338 aa). Residues 8–19 show a composition bias toward pro residues; that stretch reads PPVPPFGQPQPI. Composition is skewed to low complexity over residues 20-29 and 60-77; these read YPGYHQSSYG and SRAP…AQAP. Over residues 90-101 the composition is skewed to polar residues; sequence DVQNGPSSTVQM. Residues 123 to 132 show a composition bias toward pro residues; the sequence is VLQPYGPPPT. Polar residues-rich tracts occupy residues 133–144, 165–175, 189–215, and 240–251; these read SAQVATQLSGMQ, SLASASGSFPN, PLSQ…SFTP, and SVSQPNHVSSPP. Threonine 214 bears the Phosphothreonine mark. The span at 273 to 282 shows a compositional bias: low complexity; sequence PQQPGYQPQQ. Cysteine 425, cysteine 428, cysteine 447, and cysteine 450 together coordinate Zn(2+). Positions 425–450 are zinc finger-like; that stretch reads CNRCKAYMCPFMQFIEGGRRFQCCFC. A Gelsolin-like repeat occupies 962-1034; the sequence is TTEPPAVRAS…DNPLSKKVRG (73 aa).

The protein belongs to the SEC23/SEC24 family. SEC24 subfamily. In terms of assembly, COPII is composed of at least five proteins: the Sec23/24 complex, the Sec13/31 complex and Sar1. Interacts with TMED2 and TMED10. Interacts with GOSR2 (via IxM motif) and STX5 (via IxM motif); recruits GOSR2 and STX5 into COPII-coated vesicles. Interacts with DDHD1. Interacts with STING1; promoting STING1 translocation to the COPII vesicles. In terms of tissue distribution, ubiquitous.

Its subcellular location is the cytoplasmic vesicle. The protein resides in the COPII-coated vesicle membrane. The protein localises to the endoplasmic reticulum membrane. It localises to the cytoplasm. It is found in the cytosol. Functionally, component of the coat protein complex II (COPII) which promotes the formation of transport vesicles from the endoplasmic reticulum (ER). The coat has two main functions, the physical deformation of the endoplasmic reticulum membrane into vesicles and the selection of cargo molecules for their transport to the Golgi complex. Plays a central role in cargo selection within the COPII complex and together with SEC24D may have a different specificity compared to SEC24A and SEC24B. May more specifically package GPI-anchored proteins through the cargo receptor TMED10. May also be specific for IxM motif-containing cargos like the SNAREs GOSR2 and STX5. This chain is Protein transport protein Sec24C, found in Homo sapiens (Human).